We begin with the raw amino-acid sequence, 242 residues long: Small ribosomal subunit protein uS7m (242 aa).

The transit peptide at methionine 1 to tyrosine 37 directs the protein to the mitochondrion. At lysine 228 the chain carries N6-acetyllysine.

The protein belongs to the universal ribosomal protein uS7 family. In terms of assembly, component of the mitochondrial ribosome small subunit (28S) which comprises a 12S rRNA and about 30 distinct proteins.

The protein localises to the mitochondrion. This Bos taurus (Bovine) protein is Small ribosomal subunit protein uS7m (MRPS7).